The following is a 156-amino-acid chain: Phosphopantetheine adenylyltransferase (156 aa).

Thr9 lines the substrate pocket. ATP is bound by residues 9–10 (TF) and His17. Positions 41, 73, and 87 each coordinate substrate. ATP-binding positions include 88-90 (GVR), Glu98, and 123-129 (WVFVSST).

This sequence belongs to the bacterial CoaD family. As to quaternary structure, homohexamer. The cofactor is Mg(2+).

The protein localises to the cytoplasm. It carries out the reaction (R)-4'-phosphopantetheine + ATP + H(+) = 3'-dephospho-CoA + diphosphate. Its pathway is cofactor biosynthesis; coenzyme A biosynthesis; CoA from (R)-pantothenate: step 4/5. Its function is as follows. Reversibly transfers an adenylyl group from ATP to 4'-phosphopantetheine, yielding dephospho-CoA (dPCoA) and pyrophosphate. The polypeptide is Phosphopantetheine adenylyltransferase (Haemophilus influenzae (strain PittEE)).